A 393-amino-acid chain; its full sequence is ATP phosphoribosyltransferase regulatory subunit (393 aa).

The protein belongs to the class-II aminoacyl-tRNA synthetase family. HisZ subfamily. In terms of assembly, heteromultimer composed of HisG and HisZ subunits.

The protein localises to the cytoplasm. Its pathway is amino-acid biosynthesis; L-histidine biosynthesis; L-histidine from 5-phospho-alpha-D-ribose 1-diphosphate: step 1/9. Required for the first step of histidine biosynthesis. May allow the feedback regulation of ATP phosphoribosyltransferase activity by histidine. The polypeptide is ATP phosphoribosyltransferase regulatory subunit (Chromohalobacter salexigens (strain ATCC BAA-138 / DSM 3043 / CIP 106854 / NCIMB 13768 / 1H11)).